The chain runs to 410 residues: 3-phosphoshikimate 1-carboxyvinyltransferase (410 aa).

Residues Lys21, Ser22, and Arg26 each coordinate 3-phosphoshikimate. Lys21 is a phosphoenolpyruvate binding site. Residues Gly69 and Arg97 each coordinate phosphoenolpyruvate. The 3-phosphoshikimate site is built by Ser143, Ser144, Gln145, Ser171, Asp288, and Lys315. Gln145 is a phosphoenolpyruvate binding site. Residue Asp288 is the Proton acceptor of the active site. Residues Arg319, Arg364, and Lys389 each contribute to the phosphoenolpyruvate site.

It belongs to the EPSP synthase family. Monomer.

It is found in the cytoplasm. It carries out the reaction 3-phosphoshikimate + phosphoenolpyruvate = 5-O-(1-carboxyvinyl)-3-phosphoshikimate + phosphate. Its pathway is metabolic intermediate biosynthesis; chorismate biosynthesis; chorismate from D-erythrose 4-phosphate and phosphoenolpyruvate: step 6/7. Catalyzes the transfer of the enolpyruvyl moiety of phosphoenolpyruvate (PEP) to the 5-hydroxyl of shikimate-3-phosphate (S3P) to produce enolpyruvyl shikimate-3-phosphate and inorganic phosphate. This is 3-phosphoshikimate 1-carboxyvinyltransferase from Bacteroides fragilis (strain YCH46).